Reading from the N-terminus, the 540-residue chain is Solute carrier family 2, facilitated glucose transporter member 9 (540 aa).

Positions 1 to 31 (MARKQNRNSKELGLVPLTDDTSHAGPPGPGR) are disordered. Residues 1–51 (MARKQNRNSKELGLVPLTDDTSHAGPPGPGRALLECDHLRSGVPGGRRRKD) lie on the Cytoplasmic side of the membrane. Ser-9 is modified (phosphoserine). A helical membrane pass occupies residues 52–72 (WSCSLLVASLAGAFGSSFLYG). The Extracellular portion of the chain corresponds to 73–107 (YNLSVVNAPTPYIKAFYNESWERRHGRPIDPDTLT). An N-linked (GlcNAc...) asparagine glycan is attached at Asn-90. Residues 108–128 (LLWSVTVSIFAIGGLVGTLIV) traverse the membrane as a helical segment. Over 129 to 140 (KMIGKVLGRKHT) the chain is Cytoplasmic. The helical transmembrane segment at 141-161 (LLANNGFAISAALLMACSLQA) threads the bilayer. The Extracellular portion of the chain corresponds to 162–171 (GAFEMLIVGR). A helical transmembrane segment spans residues 172–192 (FIMGIDGGVALSVLPMYLSEI). Residues 193 to 200 (SPKEIRGS) lie on the Cytoplasmic side of the membrane. A helical membrane pass occupies residues 201 to 221 (LGQVTAIFICIGVFTGQLLGL). Topologically, residues 222–231 (PELLGKESTW) are extracellular. A helical transmembrane segment spans residues 232 to 252 (PYLFGVIVVPAVVQLLSLPFL). Topologically, residues 253–316 (PDSPRYLLLE…LLRAPYVRWQ (64 aa)) are cytoplasmic. Residues 317-337 (VVTVIVTMACYQLCGLNAIWF) traverse the membrane as a helical segment. At 338–354 (YTNSIFGKAGIPPAKIP) the chain is on the extracellular side. The chain crosses the membrane as a helical span at residues 355 to 375 (YVTLSTGGIETLAAVFSGLVI). At 376–381 (EHLGRR) the chain is on the cytoplasmic side. Residues 382 to 402 (PLLIGGFGLMGLFFGTLTITL) traverse the membrane as a helical segment. The Extracellular portion of the chain corresponds to 403 to 415 (TLQDHAPWVPYLS). A helical transmembrane segment spans residues 416–436 (IVGILAIIASFCSGPGGIPFI). Over 437 to 451 (LTGEFFQQSQRPAAF) the chain is Cytoplasmic. The helical transmembrane segment at 452-472 (IIAGTVNWLSNFAVGLLFPFI) threads the bilayer. Topologically, residues 473 to 478 (QKSLDT) are extracellular. Residues 479–499 (YCFLVFATICITGAIYLYFVL) form a helical membrane-spanning segment. At 500 to 540 (PETKNRTYAEISQAFSKRNKAYPPEEKIDSAVTDGKINGRP) the chain is on the cytoplasmic side. Ser-515 is subject to Phosphoserine. The segment at 519–540 (KAYPPEEKIDSAVTDGKINGRP) is disordered.

This sequence belongs to the major facilitator superfamily. Sugar transporter (TC 2.A.1.1) family. Glucose transporter subfamily. As to expression, most strongly expressed in basolateral membranes of proximal renal tubular cells, liver and placenta. Also detected in lung, blood leukocytes, heart skeletal muscle and chondrocytes from articular cartilage. Detected in kidney membrane (at protein level). In terms of tissue distribution, only detected in the apical membranes of polarized renal tubular cells and placenta. Detected in kidney membrane (at protein level).

The protein resides in the cell membrane. It is found in the basolateral cell membrane. It localises to the apical cell membrane. It carries out the reaction urate(out) = urate(in). Extracellular glucose and urate accelerate urate efflux. Intracellular urate, glucose and fructose accelerate urate influx. Its activity is regulated as follows. No effect of extracellular urate, glucose or fructose on urate efflux. Intracellular urate and fructose slightly accelerate urate influx. Functionally, high-capacity urate transporter, which may play a role in the urate reabsorption by proximal tubules. May have a residual high-affinity, low-capacity glucose and fructose transporter activity. Transports urate at rates 45- to 60-fold faster than glucose. Does not transport galactose. May mediate small uptake of adenine but not of other nucleobases. This chain is Solute carrier family 2, facilitated glucose transporter member 9, found in Homo sapiens (Human).